Reading from the N-terminus, the 276-residue chain is Large ribosomal subunit protein uL2 (276 aa).

Residues 224-276 (AMNPIDHPHGGGEGKTSGGRNPVTPWGVPTKGKKTRKRNKSSNKYIKRVSDKG) form a disordered region. Residues 254–270 (KGKKTRKRNKSSNKYIK) show a composition bias toward basic residues.

This sequence belongs to the universal ribosomal protein uL2 family. Part of the 50S ribosomal subunit. Forms a bridge to the 30S subunit in the 70S ribosome.

Its function is as follows. One of the primary rRNA binding proteins. Required for association of the 30S and 50S subunits to form the 70S ribosome, for tRNA binding and peptide bond formation. It has been suggested to have peptidyltransferase activity; this is somewhat controversial. Makes several contacts with the 16S rRNA in the 70S ribosome. The polypeptide is Large ribosomal subunit protein uL2 (Ehrlichia chaffeensis (strain ATCC CRL-10679 / Arkansas)).